An 83-amino-acid polypeptide reads, in one-letter code: Small ribosomal subunit protein bS18 (83 aa).

A disordered region spans residues 1 to 23; it reads MKQRNNAKRVRLEQTRRPKKNPL.

It belongs to the bacterial ribosomal protein bS18 family. As to quaternary structure, part of the 30S ribosomal subunit. Forms a tight heterodimer with protein bS6.

Functionally, binds as a heterodimer with protein bS6 to the central domain of the 16S rRNA, where it helps stabilize the platform of the 30S subunit. This chain is Small ribosomal subunit protein bS18, found in Corynebacterium efficiens (strain DSM 44549 / YS-314 / AJ 12310 / JCM 11189 / NBRC 100395).